The following is a 76-amino-acid chain: Small proline-rich protein 4 (76 aa).

Residues proline 38–lysine 76 are disordered.

It belongs to the cornifin (SPRR) family. In terms of processing, cross-linked to membrane proteins by transglutaminase.

The protein resides in the cytoplasm. It localises to the cell cortex. Functionally, cross-linked envelope protein of keratinocytes. Involved in UV-induced cornification. This is Small proline-rich protein 4 (Sprr4) from Mus musculus (Mouse).